The following is a 34-amino-acid chain: MAEKESTSPHLIVPILLLVGWIVGCIIVIYIVFF.

A helical transmembrane segment spans residues 12 to 32; sequence IVPILLLVGWIVGCIIVIYIV.

As to quaternary structure, homooligomer. Can also form heterooligomers with other sarcoplasmic/endoplasmic reticulum calcium ATPase (SERCA) regulators ARLN, ERLN, PLN and SLN. Monomer. Interacts with ATP2A1/SERCA1; the interaction results in activation of ATP2A1. Interacts as a monomer with ATP2A2/SERCA2; the interaction results in activation of ATP2A2. As to expression, highly expressed in heart (at protein level). Detected in heart and soleus, a postural muscle group of the hindlimb containing the highest enrichment of slow-twitch muscle fibers. Also expressed in diaphragm, which contains some slow-twitch fibers. Not detected in the quadriceps, a fast-twitch muscle group, or in cardiac atrial muscle. Not expressed in the prenatal heart but gradually increases in abundance postnatally.

It localises to the sarcoplasmic reticulum membrane. Its function is as follows. Enhances the activity of ATP2A1/SERCA1 ATPase in sarcoplasmic reticulum by displacing ATP2A1/SERCA1 inhibitors, thereby acting as a key regulator of skeletal muscle activity. Also enhances the activity of the ATP2A2/SERCA2 ATPase. Does not directly stimulate SERCA pump activity. Binds preferentially to the phosphorylated E1 and E2 conformational forms of ATP2A2 which predominate at high Ca(2+) concentrations during the systolic phase of the cardiac cycle. Competes with ATP2A2 inhibitor phospholamban (PLN) for binding to ATP2A2 and displaces PLN. Can activate ATP2A2 directly in the absence of PLN. Also enhances sarcoplasmic reticulum Ca(2+) uptake and myocyte contractility by displacing the SERCA inhibitory peptides sarcolipin (SLN) and myoregulin (MRLN). This Mus musculus (Mouse) protein is Sarcoplasmic/endoplasmic reticulum calcium ATPase regulator DWORF.